Consider the following 410-residue polypeptide: Peptidase T-like protein YPO1009/y3403/YP_3421 (410 aa).

H82 lines the Zn(2+) pocket. D84 is a catalytic residue. D144 is a Zn(2+) binding site. The Proton acceptor role is filled by E176. The Zn(2+) site is built by E177, D200, and H382.

The protein belongs to the peptidase M20B family. Requires Zn(2+) as cofactor.

This is Peptidase T-like protein YPO1009/y3403/YP_3421 from Yersinia pestis.